Reading from the N-terminus, the 482-residue chain is UDP-N-acetylmuramate--L-alanine ligase (482 aa).

123-129 serves as a coordination point for ATP; that stretch reads GTHGKTT.

The protein belongs to the MurCDEF family.

It localises to the cytoplasm. It carries out the reaction UDP-N-acetyl-alpha-D-muramate + L-alanine + ATP = UDP-N-acetyl-alpha-D-muramoyl-L-alanine + ADP + phosphate + H(+). It participates in cell wall biogenesis; peptidoglycan biosynthesis. In terms of biological role, cell wall formation. This is UDP-N-acetylmuramate--L-alanine ligase from Pseudomonas putida (strain GB-1).